Reading from the N-terminus, the 248-residue chain is Ubiquinone biosynthesis O-methyltransferase (248 aa).

S-adenosyl-L-methionine contacts are provided by arginine 41, glycine 72, aspartate 93, and methionine 136.

The protein belongs to the methyltransferase superfamily. UbiG/COQ3 family.

It carries out the reaction a 3-demethylubiquinol + S-adenosyl-L-methionine = a ubiquinol + S-adenosyl-L-homocysteine + H(+). The catalysed reaction is a 3-(all-trans-polyprenyl)benzene-1,2-diol + S-adenosyl-L-methionine = a 2-methoxy-6-(all-trans-polyprenyl)phenol + S-adenosyl-L-homocysteine + H(+). Its pathway is cofactor biosynthesis; ubiquinone biosynthesis. Functionally, O-methyltransferase that catalyzes the 2 O-methylation steps in the ubiquinone biosynthetic pathway. The protein is Ubiquinone biosynthesis O-methyltransferase of Sinorhizobium medicae (strain WSM419) (Ensifer medicae).